A 158-amino-acid chain; its full sequence is Non-secretory ribonuclease (158 aa).

The N-terminal stretch at 1-27 is a signal peptide; the sequence is MVPKLFTSQICLLLLLGLLGVEGSLHA. Residue His42 is the Proton acceptor of the active site. 4 disulfides stabilise this stretch: Cys50–Cys110, Cys64–Cys121, Cys82–Cys136, and Cys89–Cys98. Tyr60 is subject to 3'-nitrotyrosine. 65–69 provides a ligand contact to substrate; that stretch reads KNQNT. Asn86, Asn92, and Asn111 each carry an N-linked (GlcNAc...) asparagine glycan. His153 acts as the Proton donor in catalysis.

The protein belongs to the pancreatic ribonuclease family. Interacts with and forms a tight 1:1 complex with RNH1. Dimerization of two such complexes may occur.

It is found in the lysosome. The protein resides in the cytoplasmic granule. It carries out the reaction an [RNA] containing cytidine + H2O = an [RNA]-3'-cytidine-3'-phosphate + a 5'-hydroxy-ribonucleotide-3'-[RNA].. The catalysed reaction is an [RNA] containing uridine + H2O = an [RNA]-3'-uridine-3'-phosphate + a 5'-hydroxy-ribonucleotide-3'-[RNA].. Its function is as follows. This is a non-secretory ribonuclease. It is a pyrimidine specific nuclease with a slight preference for U. Cytotoxin and helminthotoxin. Possesses a wide variety of biological activities. The protein is Non-secretory ribonuclease (RNASE2) of Aotus trivirgatus (Three-striped night monkey).